Consider the following 220-residue polypeptide: Mediator of RNA polymerase II transcription subunit 19 (220 aa).

Residues Ala-171 to Glu-220 are disordered. Residues Gly-178 to Asn-189 are compositionally biased toward low complexity. A compositionally biased stretch (basic and acidic residues) spans Ser-208 to Glu-220.

It belongs to the Mediator complex subunit 19 family. In terms of assembly, component of the Mediator complex, which is composed of at least 21 subunits that form three structurally distinct submodules. The Mediator head module contains MED6, MED8, MED11, SRB4/MED17, SRB5/MED18, ROX3/MED19, SRB2/MED20 and SRB6/MED22, the middle module contains MED1, MED4, NUT1/MED5, MED7, CSE2/MED9, NUT2/MED10, SRB7/MED21 and SOH1/MED31, and the tail module contains MED2, PGD1/MED3, RGR1/MED14, GAL11/MED15 and SIN4/MED16. The head and the middle modules interact directly with RNA polymerase II, whereas the elongated tail module interacts with gene-specific regulatory proteins.

It is found in the nucleus. In terms of biological role, component of the Mediator complex, a coactivator involved in the regulated transcription of nearly all RNA polymerase II-dependent genes. Mediator functions as a bridge to convey information from gene-specific regulatory proteins to the basal RNA polymerase II transcription machinery. The Mediator complex, having a compact conformation in its free form, is recruited to promoters by direct interactions with regulatory proteins and serves for the assembly of a functional preinitiation complex with RNA polymerase II and the general transcription factors. The Mediator complex unfolds to an extended conformation and partially surrounds RNA polymerase II, specifically interacting with the unphosphorylated form of the C-terminal domain (CTD) of RNA polymerase II. The Mediator complex dissociates from the RNA polymerase II holoenzyme and stays at the promoter when transcriptional elongation begins. This is Mediator of RNA polymerase II transcription subunit 19 (ROX3) from Saccharomyces cerevisiae (strain ATCC 204508 / S288c) (Baker's yeast).